Consider the following 1341-residue polypeptide: MPSLSGSDELIFFVNGKKVVVKKPDPEVTLLFYLRRELHLTGTKFACGEGGCGACTVMVSRYSASSKQIRHYPVTACLVPICSLHGAAVTTVEGVGSIRTRVHPVQERLAKCHGTQCGFCSPGMVMSIYTLLRNHPDPTPEQVTEALGGNLCRCTGYRPIVESGKTFCANPTVCQVKRPGRCCLEQEEEEAGSVHTREKMCTKLYDKDEFQPLDPSQEPIFPPELIRMAEDPNKRRLTFQGERTTWLAPATLPDLLELRAEFPQAPLIMGNTTVGPDIKFKGEFHPVFVSPLELPELCVLNSEGDGVTVGSGHSLAQLSDALQSIVSQQPSERTETCRALLNHLRTLAGVQIRSMATLGGHVATRATVSDLNPILAAGKTTIHLVSKEGERQIPLDGAFLEGSPRAGLRPGEIVLSVFIPYSSQWQFVSGLRQAQRQENAMAIVNAGMSVRLEDGSSTIRDLQVFYGGIGPTVLSASRTCGQLVGRQWDDQMLGEACRGILDELRLPPGAKGGQVEFRHTLMLSLLFKFYLRVQRALSKLDPQKFPDIPEEYTSALEEFPIGTPQGTQIFRCVDPHQPPQDPVGHPVMHQAGLKHATGEAAFVDDLPLVSQELFLAVVTSTRAHAKIISIDTGEALALPGVVAVITAEDVPGENNHQGEIFYAQREVVCVGQIVCTVAADTYAHAREAAQKVKVEYEDIEPRIITIEQALEHSSFLSPERKIEQGNVEQAFKHVDQVIEGEVHVEGQEHFYMETQTILAVPRAEDKEMVLHLGTQFPTHVQEFVATALNVPRNRIACHMRRAGGAFGGKVTKPALLGAVAAVAAKKTGRPIRFVLERGDDMLITAGRHPLLGRYKVGFMKSGLIKAVDLEFYINGGCTPDESQLVIEYVVLKSENAYYIPNFRCRGRACKTNLPSNTAFRGFGFPQATVVVEAYMTAVASHCDLLPEEVREMNMYKRPSQTAYRQRFDPEPLRRCWKDCLEHSSFHARKRAAEDFNRQSRWKKRGLAMIPMKYTIGVPVAYYHQAAALVHIYLDGSVLLTHGGCELGQGLHTKMMQVASRELGIPTSYIHLSETSTVTVPNAVFTAGSMGTDINGKAVQNACQTLMARLQPVIRRNPKGKWEEWIKKAFEESISLSATGYFRGFQTNMDWDKERGDAFPYYVYGAACAEVDVDCLSGAHKLLRADIFMDAAFSINPAVDIGQIEGAFVQGMGLYTTEELKYSPKGKLRSQGTNDYKIPTVTEIPEEFHVTLVHSRNPVAIYSSKGLGEAGMFLGSSVISAIWDAVAAARKERKGAESVPETLAVRSPATPEWIRMACVDQFTDMIPRDDPSTFTPWSICVS.

Positions 8 to 95 (DELIFFVNGK…GAAVTTVEGV (88 aa)) constitute a 2Fe-2S ferredoxin-type domain. Cys-47, Cys-52, Cys-55, and Cys-77 together coordinate [2Fe-2S] cluster. Position 116 (Gln-116) interacts with Mo-molybdopterin. [2Fe-2S] cluster contacts are provided by Cys-117, Cys-120, Cys-152, and Cys-154. Residue Cys-154 coordinates Mo-molybdopterin. The 186-residue stretch at 239–424 (FQGERTTWLA…LSVFIPYSSQ (186 aa)) folds into the FAD-binding PCMH-type domain. FAD-binding positions include 267–274 (LIMGNTTV), Ala-348, Thr-357, His-361, Asp-370, and Val-414. Mo-molybdopterin contacts are provided by residues Ala-805, 805–806 (AF), Leu-1046, 1087–1090 (GSMG), Gln-1202, and Leu-1266. Glu-1268 acts as the Proton acceptor; for azaheterocycle hydroxylase activity in catalysis.

The protein belongs to the xanthine dehydrogenase family. Homodimer. The cofactor is [2Fe-2S] cluster. It depends on FAD as a cofactor. Requires Mo-molybdopterin as cofactor. Detected in liver, testis, kidney, brain, Harderian gland and olfactory mucosa.

Its subcellular location is the cytoplasm. The catalysed reaction is an aldehyde + O2 + H2O = a carboxylate + H2O2 + H(+). It catalyses the reaction retinal + O2 + H2O = retinoate + H2O2 + H(+). Its function is as follows. Aldehyde oxidase able to catalyze the oxidation of retinaldehyde into retinoate. Acts as a negative modulator of the epidermal trophism. May be able to oxidize a wide variety of aldehydes into their corresponding carboxylates and to hydroxylate azaheterocycles. This is Aldehyde oxidase 4 (AOX4) from Cavia porcellus (Guinea pig).